A 364-amino-acid polypeptide reads, in one-letter code: Pectinesterase 1 (364 aa).

A signal peptide spans 1–22; sequence MSCIAVEAVLLGILLYIPIVLS. N-linked (GlcNAc...) asparagine glycosylation occurs at Asn103. Residue Asp220 is part of the active site.

This sequence belongs to the pectinesterase family. Post-translationally, glycosylated. As to expression, expressed in pollen.

It is found in the secreted. It carries out the reaction [(1-&gt;4)-alpha-D-galacturonosyl methyl ester](n) + n H2O = [(1-&gt;4)-alpha-D-galacturonosyl](n) + n methanol + n H(+). It functions in the pathway glycan metabolism; pectin degradation; 2-dehydro-3-deoxy-D-gluconate from pectin: step 1/5. Catalyzes the demethylesterification of homogalacturonan components of pectin. May be involved in pollen tube development. The polypeptide is Pectinesterase 1 (Olea europaea (Common olive)).